A 504-amino-acid polypeptide reads, in one-letter code: Maturase K (504 aa).

This sequence belongs to the intron maturase 2 family. MatK subfamily.

It localises to the plastid. The protein localises to the chloroplast. Usually encoded in the trnK tRNA gene intron. Probably assists in splicing its own and other chloroplast group II introns. The chain is Maturase K from Vauquelinia californica (Arizona rosewood).